We begin with the raw amino-acid sequence, 126 residues long: Large ribosomal subunit protein bL19 (126 aa).

This sequence belongs to the bacterial ribosomal protein bL19 family.

Functionally, this protein is located at the 30S-50S ribosomal subunit interface and may play a role in the structure and function of the aminoacyl-tRNA binding site. This is Large ribosomal subunit protein bL19 from Prochlorococcus marinus (strain MIT 9312).